Consider the following 122-residue polypeptide: Urease subunit beta (122 aa).

The protein belongs to the urease beta subunit family. In terms of assembly, heterotrimer of UreA (gamma), UreB (beta) and UreC (alpha) subunits. Three heterotrimers associate to form the active enzyme.

It is found in the cytoplasm. It carries out the reaction urea + 2 H2O + H(+) = hydrogencarbonate + 2 NH4(+). It functions in the pathway nitrogen metabolism; urea degradation; CO(2) and NH(3) from urea (urease route): step 1/1. The protein is Urease subunit beta of Lysinibacillus sphaericus (strain C3-41).